The following is a 356-amino-acid chain: uncharacterized protein (356 aa).

Residue 37–44 participates in NADP(+) binding; that stretch reads TGASSGIG. Ser168 contributes to the substrate binding site. Tyr181 acts as the Proton acceptor in catalysis.

Belongs to the short-chain dehydrogenases/reductases (SDR) family.

This is an uncharacterized protein from Bacillus subtilis (strain 168).